A 125-amino-acid chain; its full sequence is Ribonuclease P protein component (125 aa).

It belongs to the RnpA family. Consists of a catalytic RNA component (M1 or rnpB) and a protein subunit.

It catalyses the reaction Endonucleolytic cleavage of RNA, removing 5'-extranucleotides from tRNA precursor.. Functionally, RNaseP catalyzes the removal of the 5'-leader sequence from pre-tRNA to produce the mature 5'-terminus. It can also cleave other RNA substrates such as 4.5S RNA. The protein component plays an auxiliary but essential role in vivo by binding to the 5'-leader sequence and broadening the substrate specificity of the ribozyme. This Rhodococcus opacus (strain B4) protein is Ribonuclease P protein component.